The sequence spans 432 residues: Enolase (432 aa).

Residue Gln163 participates in (2R)-2-phosphoglycerate binding. The active-site Proton donor is the Glu205. Mg(2+) is bound by residues Asp241, Glu289, and Asp316. (2R)-2-phosphoglycerate contacts are provided by Lys341, Arg370, Ser371, and Lys392. Lys341 (proton acceptor) is an active-site residue.

The protein belongs to the enolase family. Mg(2+) serves as cofactor.

The protein localises to the cytoplasm. Its subcellular location is the secreted. It is found in the cell surface. The enzyme catalyses (2R)-2-phosphoglycerate = phosphoenolpyruvate + H2O. Its pathway is carbohydrate degradation; glycolysis; pyruvate from D-glyceraldehyde 3-phosphate: step 4/5. Its function is as follows. Catalyzes the reversible conversion of 2-phosphoglycerate (2-PG) into phosphoenolpyruvate (PEP). It is essential for the degradation of carbohydrates via glycolysis. This is Enolase from Treponema pallidum (strain Nichols).